Consider the following 470-residue polypeptide: Asparagine--tRNA ligase (470 aa).

Belongs to the class-II aminoacyl-tRNA synthetase family. Homodimer.

It is found in the cytoplasm. The catalysed reaction is tRNA(Asn) + L-asparagine + ATP = L-asparaginyl-tRNA(Asn) + AMP + diphosphate + H(+). This chain is Asparagine--tRNA ligase, found in Blochmanniella pennsylvanica (strain BPEN).